A 45-amino-acid polypeptide reads, in one-letter code: Large ribosomal subunit protein bL34 (45 aa).

Positions 1–24 are disordered; that stretch reads MTKRTFGGTSRKRKRVSGFRVRMR. Positions 10 to 24 are enriched in basic residues; that stretch reads SRKRKRVSGFRVRMR.

This sequence belongs to the bacterial ribosomal protein bL34 family.

This chain is Large ribosomal subunit protein bL34, found in Prochlorococcus marinus (strain MIT 9303).